The primary structure comprises 502 residues: Phenylalanine--tRNA ligase alpha subunit (502 aa).

L-phenylalanine-binding positions include T339, 382 to 384 (QIE), and Y422. Mg(2+) is bound at residue E424. F448 lines the L-phenylalanine pocket.

Belongs to the class-II aminoacyl-tRNA synthetase family. Phe-tRNA synthetase alpha subunit type 2 subfamily. As to quaternary structure, tetramer of two alpha and two beta subunits. The cofactor is Mg(2+).

The protein localises to the cytoplasm. It catalyses the reaction tRNA(Phe) + L-phenylalanine + ATP = L-phenylalanyl-tRNA(Phe) + AMP + diphosphate + H(+). This Halobacterium salinarum (strain ATCC 29341 / DSM 671 / R1) protein is Phenylalanine--tRNA ligase alpha subunit.